Reading from the N-terminus, the 647-residue chain is Macrolide export ATP-binding/permease protein MacB (647 aa).

Residues 7–245 enclose the ABC transporter domain; the sequence is IRLEDICKTF…EATLQPHEEI (239 aa). 43-50 contributes to the ATP binding site; the sequence is GASGSGKS. 4 consecutive transmembrane segments (helical) span residues 274–294, 529–549, 573–593, and 610–630; these read VLTL…LAIG, VAAI…LVSV, FIIE…ILGL, and FGPV…FGFL.

It belongs to the ABC transporter superfamily. Macrolide exporter (TC 3.A.1.122) family. In terms of assembly, homodimer.

It localises to the cell inner membrane. Non-canonical ABC transporter that contains transmembrane domains (TMD), which form a pore in the inner membrane, and an ATP-binding domain (NBD), which is responsible for energy generation. Confers resistance against macrolides. The polypeptide is Macrolide export ATP-binding/permease protein MacB (Brucella melitensis biotype 1 (strain ATCC 23456 / CCUG 17765 / NCTC 10094 / 16M)).